The primary structure comprises 126 residues: Larval cuticle protein 2 (126 aa).

The first 16 residues, 1–16, serve as a signal peptide directing secretion; that stretch reads MFKFVMVFAVLGLAAA. The region spanning 39-100 is the Chitin-binding type R&amp;R domain; sequence ADGFDTDLVV…PVGAVLPTPP (62 aa).

Functionally, component of the larval cuticle. The polypeptide is Larval cuticle protein 2 (Lcp2) (Drosophila miranda (Fruit fly)).